Consider the following 21-residue polypeptide: Ocellatin-2 (21 aa).

Ile21 is subject to Isoleucine amide.

As to expression, expressed by the skin dorsal glands.

The protein localises to the secreted. Functionally, has hemolytic activity against human erythrocytes and antibacterial activity against the Gram-negative bacterium E.coli. This Leptodactylus ocellatus (Argus frog) protein is Ocellatin-2.